The sequence spans 319 residues: Large ribosomal subunit protein uL10 (319 aa).

A compositionally biased stretch (low complexity) spans 286 to 295; that stretch reads ADSGAAAPSA. Positions 286-319 are disordered; that stretch reads ADSGAAAPSAAKEEEKKEEPEEESDGDLGMSLFD.

Belongs to the universal ribosomal protein uL10 family. In terms of assembly, P0 forms a pentameric complex by interaction with dimers of P1 and P2. Interacts with NSF. Post-translationally, phosphorylated. In terms of tissue distribution, highly expressed in stems, inflorescences and immature seeds (at protein level). Expressed in leaves and mature seeds (at protein level).

Ribosomal protein P0 is the functional equivalent of E.coli protein L10. The chain is Large ribosomal subunit protein uL10 from Oryza sativa subsp. japonica (Rice).